The chain runs to 557 residues: ABC1 family protein MCP2 homolog (557 aa).

The transit peptide at Met-1–Glu-33 directs the protein to the mitochondrion. The Mitochondrial matrix portion of the chain corresponds to His-34–Lys-39. Residues Pro-40–Val-56 form a helical membrane-spanning segment. Over Asp-57–Leu-557 the chain is Mitochondrial intermembrane.

The protein belongs to the protein kinase superfamily. ADCK protein kinase family.

It localises to the mitochondrion inner membrane. Its function is as follows. Involved in mitochondrial lipid homeostasis. The polypeptide is ABC1 family protein MCP2 homolog (Schizosaccharomyces pombe (strain 972 / ATCC 24843) (Fission yeast)).